The sequence spans 444 residues: Na(+)-translocating NADH-quinone reductase subunit A (444 aa).

This sequence belongs to the NqrA family. As to quaternary structure, composed of six subunits; NqrA, NqrB, NqrC, NqrD, NqrE and NqrF.

The catalysed reaction is a ubiquinone + n Na(+)(in) + NADH + H(+) = a ubiquinol + n Na(+)(out) + NAD(+). NQR complex catalyzes the reduction of ubiquinone-1 to ubiquinol by two successive reactions, coupled with the transport of Na(+) ions from the cytoplasm to the periplasm. NqrA to NqrE are probably involved in the second step, the conversion of ubisemiquinone to ubiquinol. This chain is Na(+)-translocating NADH-quinone reductase subunit A, found in Shewanella amazonensis (strain ATCC BAA-1098 / SB2B).